Reading from the N-terminus, the 85-residue chain is Large ribosomal subunit protein bL27 (85 aa).

The disordered stretch occupies residues 1-22 (MAHKKAGGSSRNGRDSHSKRLG).

The protein belongs to the bacterial ribosomal protein bL27 family.

The chain is Large ribosomal subunit protein bL27 from Nitrosomonas europaea (strain ATCC 19718 / CIP 103999 / KCTC 2705 / NBRC 14298).